A 102-amino-acid chain; its full sequence is Protamine-2 (102 aa).

Positions M1–H102 are disordered. 2 positions are modified to phosphoserine: S8 and S10. Residues S8–H17 are compositionally biased toward basic and acidic residues. The segment covering G18–N29 has biased composition (low complexity). A compositionally biased stretch (basic and acidic residues) spans E39 to H48. Basic residues predominate over residues G49–H102.

Belongs to the protamine P2 family. Interacts with TDRP. In terms of processing, proteolytic processing into mature chains is required for histone eviction during spermatogenesis. Transition proteins (TNP1 and TNP2) are required for processing. As to expression, testis.

It is found in the nucleus. The protein localises to the chromosome. Functionally, protamines substitute for histones in the chromatin of sperm during the haploid phase of spermatogenesis. They compact sperm DNA into a highly condensed, stable and inactive complex. This Macaca mulatta (Rhesus macaque) protein is Protamine-2 (PRM2).